The chain runs to 453 residues: MIEKSNNIYLSIDPIVERIKKNGEELPLINSEKKGIDYTQIVVYLVGLSDGLIHLASLAIYYLFKDHYRLTPYQVSLILMYPYLPFILKPIIALITDSISIFGMRRKPYLFLFSLFQSLNFLSLALVDLSLIQATLVLFFISLCASFCTTVAEALVVESSIGKTYSQGTNKVTEFIASKAVGSLSVAYFSGYFLEKVSREYIFMATSIFPLIISISCLFLKEKEYVTRKNIFKQMTDLIKFINTPVFIGPFLYIFVYMSGPDYDDAFFFFCTNKLGFRPSFMGTLRLTYGIASLIGIIVYRVFLKNSSLRNTLIFTTLVSFPIYISPIILTEKINKYFGISNELFVLSGGFLIEAITEIQLLPLFILTANICQEGLEASVFATILSVKNLGSLTKKGTSSLLTYLMKIDTYNFDNLSMYILTCGLFLLLSLSLVPLLPSEDQIESLKNKKIQK.

11 consecutive transmembrane segments (helical) span residues 41–64 (IVVY…YYLF), 76–96 (SLIL…ALIT), 108–126 (PYLF…SLAL), 132–156 (IQAT…EALV), 176–195 (IASK…YFLE), 201–220 (YIFM…CLFL), 241–260 (FINT…YMSG), 280–300 (SFMG…IIVY), 312–330 (TLIF…PIIL), 346–366 (VLSG…PLFI), and 416–437 (LSMY…VPLL).

The protein belongs to the major facilitator superfamily. Folate-biopterin transporter (TC 2.A.71) family.

It is found in the plastid. The protein resides in the apicoplast. Its subcellular location is the membrane. In terms of biological role, putative folate transporter. Required for sporogony of malaria parasites and host switching. The polypeptide is Putative folate transporter 2 (Plasmodium berghei (strain Anka)).